A 122-amino-acid polypeptide reads, in one-letter code: Basic phospholipase A2 Cdr-13 (122 aa).

7 disulfides stabilise this stretch: Cys26-Cys115, Cys28-Cys44, Cys43-Cys95, Cys49-Cys122, Cys50-Cys88, Cys57-Cys81, and Cys75-Cys86. Ca(2+) contacts are provided by Tyr27, Gly29, and Gly31. His47 is an active-site residue. Asp48 contributes to the Ca(2+) binding site. Asp89 is a catalytic residue.

The cofactor is Ca(2+). Expressed by the venom gland.

The protein localises to the secreted. The enzyme catalyses a 1,2-diacyl-sn-glycero-3-phosphocholine + H2O = a 1-acyl-sn-glycero-3-phosphocholine + a fatty acid + H(+). In terms of biological role, snake venom phospholipase A2 (PLA2) that induces myonecrosis and edema upon subcutaneous injections in mice. In vitro, causes a potent blockade of neuromuscular transmission in young chicken biventer cervicis preparation and produces cytotoxicity in murine C2C12 skeletal muscle myotubes and lack cytolytic activity upon myoblasts in vitro. PLA2 catalyzes the calcium-dependent hydrolysis of the 2-acyl groups in 3-sn-phosphoglycerides. This chain is Basic phospholipase A2 Cdr-13, found in Crotalus durissus ruruima (South American rattlesnake).